We begin with the raw amino-acid sequence, 446 residues long: Forkhead box protein F2 (446 aa).

The span at Met-1 to Pro-18 shows a compositional bias: pro residues. The interval Met-1–Arg-97 is disordered. Low complexity predominate over residues Ser-45 to Ser-78. Positions Lys-100–Arg-194 form a DNA-binding region, fork-head. Disordered regions lie at residues Ala-257–Pro-278, Gly-304–Met-325, and Ala-340–Pro-371. Residues Ala-263–Pro-274 are compositionally biased toward basic residues. A compositionally biased stretch (low complexity) spans Gly-311 to Met-325.

As to quaternary structure, interacts with the transcription factors TBP and TFIIB. In terms of tissue distribution, uniquely expressed in the bronchiolar epithelium and in type II pneumocytes.

It localises to the nucleus. Probable transcription activator for a number of lung-specific genes. Mediates up-regulation of the E3 ligase IRF2BPL and drives ubiquitination and degradation of CTNNB1. The sequence is that of Forkhead box protein F2 (Foxf2) from Mus musculus (Mouse).